Consider the following 338-residue polypeptide: Nicotinate-nucleotide--dimethylbenzimidazole phosphoribosyltransferase (338 aa).

Residue E305 is the Proton acceptor of the active site.

It belongs to the CobT family.

It catalyses the reaction 5,6-dimethylbenzimidazole + nicotinate beta-D-ribonucleotide = alpha-ribazole 5'-phosphate + nicotinate + H(+). It participates in nucleoside biosynthesis; alpha-ribazole biosynthesis; alpha-ribazole from 5,6-dimethylbenzimidazole: step 1/2. In terms of biological role, catalyzes the synthesis of alpha-ribazole-5'-phosphate from nicotinate mononucleotide (NAMN) and 5,6-dimethylbenzimidazole (DMB). This chain is Nicotinate-nucleotide--dimethylbenzimidazole phosphoribosyltransferase, found in Sinorhizobium medicae (strain WSM419) (Ensifer medicae).